Consider the following 263-residue polypeptide: Proteasome subunit alpha type-1 (263 aa).

M1 is subject to N-acetylmethionine. S110 is subject to Phosphoserine; alternate. An O-linked (GlcNAc) serine; alternate glycan is attached at S110. Residue K115 forms a Glycyl lysine isopeptide (Lys-Gly) (interchain with G-Cter in ubiquitin) linkage. S177 is modified (phosphoserine). A Glycyl lysine isopeptide (Lys-Gly) (interchain with G-Cter in ubiquitin) cross-link involves residue K208. The disordered stretch occupies residues 232–263 (FLEGLEERPQRKAQPAQPADEPAEKADEPMEH). The span at 253 to 263 (PAEKADEPMEH) shows a compositional bias: basic and acidic residues.

Belongs to the peptidase T1A family. As to quaternary structure, the 26S proteasome consists of a 20S proteasome core and two 19S regulatory subunits. The 20S proteasome core is a barrel-shaped complex made of 28 subunits that are arranged in four stacked rings. The two outer rings are each formed by seven alpha subunits, and the two inner rings are formed by seven beta subunits. The proteolytic activity is exerted by three beta-subunits PSMB5, PSMB6 and PSMB7. Interacts with NOTCH3. Interacts with ZFAND1.

It is found in the cytoplasm. The protein resides in the nucleus. Functionally, component of the 20S core proteasome complex involved in the proteolytic degradation of most intracellular proteins. This complex plays numerous essential roles within the cell by associating with different regulatory particles. Associated with two 19S regulatory particles, forms the 26S proteasome and thus participates in the ATP-dependent degradation of ubiquitinated proteins. The 26S proteasome plays a key role in the maintenance of protein homeostasis by removing misfolded or damaged proteins that could impair cellular functions, and by removing proteins whose functions are no longer required. Associated with the PA200 or PA28, the 20S proteasome mediates ubiquitin-independent protein degradation. This type of proteolysis is required in several pathways including spermatogenesis (20S-PA200 complex) or generation of a subset of MHC class I-presented antigenic peptides (20S-PA28 complex). The chain is Proteasome subunit alpha type-1 from Homo sapiens (Human).